We begin with the raw amino-acid sequence, 145 residues long: D-aminoacyl-tRNA deacylase (145 aa).

The short motif at 137-138 is the Gly-cisPro motif, important for rejection of L-amino acids element; sequence GP.

The protein belongs to the DTD family. As to quaternary structure, homodimer.

The protein localises to the cytoplasm. It carries out the reaction glycyl-tRNA(Ala) + H2O = tRNA(Ala) + glycine + H(+). The enzyme catalyses a D-aminoacyl-tRNA + H2O = a tRNA + a D-alpha-amino acid + H(+). An aminoacyl-tRNA editing enzyme that deacylates mischarged D-aminoacyl-tRNAs. Also deacylates mischarged glycyl-tRNA(Ala), protecting cells against glycine mischarging by AlaRS. Acts via tRNA-based rather than protein-based catalysis; rejects L-amino acids rather than detecting D-amino acids in the active site. By recycling D-aminoacyl-tRNA to D-amino acids and free tRNA molecules, this enzyme counteracts the toxicity associated with the formation of D-aminoacyl-tRNA entities in vivo and helps enforce protein L-homochirality. The sequence is that of D-aminoacyl-tRNA deacylase from Limosilactobacillus reuteri (strain DSM 20016) (Lactobacillus reuteri).